The following is a 183-amino-acid chain: CASP-like protein UU1 (183 aa).

Topologically, residues 1–33 (MEESQQQSTKFDAPPSPYVPSRVYLAQIYWKKP) are cytoplasmic. Residues 34-54 (AIVVLRVLQFVFSLIAFSVMA) traverse the membrane as a helical segment. The Extracellular segment spans residues 55 to 72 (DLLHDVQGSIKSLSYTVA). Residues 73 to 93 (IGVLACAYALAQLSFSLWCVI) form a helical membrane-spanning segment. Residues 94 to 118 (RGATSSSGVTPLYQYATFICDQMST) lie on the Cytoplasmic side of the membrane. A helical membrane pass occupies residues 119-139 (YFLISAASATATLIDVSGVCG). At 140-156 (SNGSGTNLCSRSTASVT) the chain is on the extracellular side. N141 carries an N-linked (GlcNAc...) asparagine glycan. A helical transmembrane segment spans residues 157 to 177 (FAFLAFLAFSASSVLTGYYLV). Residues 178-183 (KCILKA) lie on the Cytoplasmic side of the membrane.

The protein belongs to the Casparian strip membrane proteins (CASP) family. In terms of assembly, homodimer and heterodimers.

The protein localises to the cell membrane. This chain is CASP-like protein UU1, found in Selaginella moellendorffii (Spikemoss).